Consider the following 366-residue polypeptide: Melatonin receptor type 1A (366 aa).

The Extracellular segment spans residues 1–45 (MAGRLWGSPGGTPKGNGSSALLNVSQAAPGAGDGVRPRPSWLAAT). N-linked (GlcNAc...) asparagine glycosylation is found at Asn-16 and Asn-23. The helical transmembrane segment at 46 to 66 (LASILIFTIVVDIVGNLLVVL) threads the bilayer. The Cytoplasmic segment spans residues 67-79 (SVYRNKKLRNAGN). The chain crosses the membrane as a helical span at residues 80–100 (VFVVSLAVADLLVAVYPYPLA). Residues 101-118 (LASIVNNGWSLSSLHCQL) are Extracellular-facing. An intrachain disulfide couples Cys-116 to Cys-193. Residues 119–139 (SGFLMGLSVIGSVFSITGIAI) form a helical membrane-spanning segment. The Cytoplasmic segment spans residues 140 to 158 (NRYCCICHSLRYGKLYSGT). Residues 159 to 179 (NSLCYVFLIWTLTLVAIVPNL) traverse the membrane as a helical segment. Residues 180–203 (CVGTLQYDPRIYSCTFTQSVSSAY) are Extracellular-facing. The chain crosses the membrane as a helical span at residues 204–224 (TIAVVVFHFIVPMLVVVFCYL). At 225 to 256 (RIWALVLQVRWKVKPDNKPKLKPQDFRNFVTM) the chain is on the cytoplasmic side. The helical transmembrane segment at 257 to 277 (FVVFVLFAICWAPLNFIGLVV) threads the bilayer. At 278–290 (ASDPASMAPRIPE) the chain is on the extracellular side. Residues 291 to 311 (WLFVASYYMAYFNSCLNAIIY) form a helical membrane-spanning segment. Residues 312-366 (GLLNQNFRQEYRKIIVSLCTTKMFFVDSSNHVADRIKRKPSPLIANHNLIKVDSV) are Cytoplasmic-facing.

Belongs to the G-protein coupled receptor 1 family.

The protein localises to the cell membrane. Functionally, high affinity receptor for melatonin. Likely to mediate the reproductive and circadian actions of melatonin. The activity of this receptor is mediated by pertussis toxin sensitive G proteins that inhibit adenylate cyclase activity. Possibly involved in sleep induction, by melatonin activation of the potassium channel KCNMA1/BK and the dissociation of G-beta and G-gamma subunits, thereby decreasing synaptic transmission. In Ovis aries (Sheep), this protein is Melatonin receptor type 1A (MTNR1A).